A 67-amino-acid chain; its full sequence is DNA-directed RNA polymerase subunit omega (67 aa).

Belongs to the RNA polymerase subunit omega family. As to quaternary structure, the RNAP catalytic core consists of 2 alpha, 1 beta, 1 beta' and 1 omega subunit. When a sigma factor is associated with the core the holoenzyme is formed, which can initiate transcription.

The catalysed reaction is RNA(n) + a ribonucleoside 5'-triphosphate = RNA(n+1) + diphosphate. Its function is as follows. Promotes RNA polymerase assembly. Latches the N- and C-terminal regions of the beta' subunit thereby facilitating its interaction with the beta and alpha subunits. In Delftia acidovorans (strain DSM 14801 / SPH-1), this protein is DNA-directed RNA polymerase subunit omega.